A 539-amino-acid polypeptide reads, in one-letter code: Cytochrome c oxidase subunit 1 homolog, bacteroid (539 aa).

Transmembrane regions (helical) follow at residues 4–24 (TVEM…AGLA), 28–48 (LFGA…LVLM), and 75–95 (GVVA…VVAL). His-117 serves as a coordination point for heme b. 8 helical membrane-spanning segments follow: residues 118–138 (TSAV…FYVV), 154–174 (FVFW…LLGI), 187–207 (VDLW…GTIM), 214–234 (IYVA…LHVV), 265–285 (GHNA…YYFI), 298–318 (LSII…PHHL), 330–350 (LGMV…INGL), and 368–388 (MMVM…MMSI). Cu cation contacts are provided by His-266, His-316, and His-317. 2 residues coordinate heme b: His-404 and His-406. The next 4 membrane-spanning stretches (helical) occupy residues 405-425 (VHSG…YYLV), 443-463 (HFWL…VAGI), 475-495 (QGFL…YYVM), and 499-519 (GGAL…MTIL).

Belongs to the heme-copper respiratory oxidase family. It depends on Cu(2+) as a cofactor. Requires heme b as cofactor.

The protein resides in the cell membrane. It carries out the reaction 4 Fe(II)-[cytochrome c] + O2 + 8 H(+)(in) = 4 Fe(III)-[cytochrome c] + 2 H2O + 4 H(+)(out). Its pathway is energy metabolism; oxidative phosphorylation. Its function is as follows. Cytochrome c oxidase is the component of the respiratory chain that catalyzes the reduction of oxygen to water. Subunits 1-3 form the functional core of the enzyme complex. Co I is the catalytic subunit of the enzyme. Electrons originating in cytochrome c or a quinol are transferred to the bimetallic center formed by a high-spin heme and copper B. In Rhizobium meliloti (strain 1021) (Ensifer meliloti), this protein is Cytochrome c oxidase subunit 1 homolog, bacteroid (fixN).